A 281-amino-acid chain; its full sequence is Pantothenate synthetase (281 aa).

Residue 30 to 37 coordinates ATP; it reads MGYLHEGH. His-37 functions as the Proton donor in the catalytic mechanism. Gln-61 provides a ligand contact to (R)-pantoate. Beta-alanine is bound at residue Gln-61. Residue 147-150 coordinates ATP; it reads GEKD. Gln-153 contacts (R)-pantoate. ATP-binding positions include Ile-176 and 184-187; that span reads KSSR.

Belongs to the pantothenate synthetase family. Homodimer.

It localises to the cytoplasm. It carries out the reaction (R)-pantoate + beta-alanine + ATP = (R)-pantothenate + AMP + diphosphate + H(+). Its pathway is cofactor biosynthesis; (R)-pantothenate biosynthesis; (R)-pantothenate from (R)-pantoate and beta-alanine: step 1/1. Functionally, catalyzes the condensation of pantoate with beta-alanine in an ATP-dependent reaction via a pantoyl-adenylate intermediate. This Clostridium botulinum (strain Okra / Type B1) protein is Pantothenate synthetase.